The primary structure comprises 360 residues: Peptide chain release factor 1 (360 aa).

Gln-235 bears the N5-methylglutamine mark. Residues 283–308 (MQKRQQAEASERRNLLGSGDRSDRNR) are compositionally biased toward basic and acidic residues. The segment at 283–313 (MQKRQQAEASERRNLLGSGDRSDRNRTYNFP) is disordered.

This sequence belongs to the prokaryotic/mitochondrial release factor family. Methylated by PrmC. Methylation increases the termination efficiency of RF1.

The protein resides in the cytoplasm. Functionally, peptide chain release factor 1 directs the termination of translation in response to the peptide chain termination codons UAG and UAA. The protein is Peptide chain release factor 1 of Yersinia enterocolitica serotype O:8 / biotype 1B (strain NCTC 13174 / 8081).